Reading from the N-terminus, the 514-residue chain is Uronyl 2-sulfotransferase homolog pip (514 aa).

Over 1-30 (MSLNAERSYKMKLRDVENAFKYRRIPYPKR) the chain is Cytoplasmic. A helical; Signal-anchor for type II membrane protein membrane pass occupies residues 31–50 (SVELIALLAISCTFFLFMHT). Topologically, residues 51 to 514 (NKLNSRLKEM…EQQNEYNEDY (464 aa)) are lumenal. The span at 112-121 (HDRRSSEEQL) shows a compositional bias: basic and acidic residues. Residues 112–185 (HDRRSSEEQL…DEDEVEENDD (74 aa)) are disordered. Positions 127 to 140 (HGHHHDHHSHHHHM) are enriched in basic residues. The segment covering 155 to 170 (HDKQLAVPDNKHKEDE) has biased composition (basic and acidic residues). Positions 171–185 (VHYEDDEDEVEENDD) are enriched in acidic residues. Asparagine 207 carries N-linked (GlcNAc...) asparagine glycosylation. Histidine 282 is a catalytic residue. Asparagine 287, asparagine 416, asparagine 451, and asparagine 467 each carry an N-linked (GlcNAc...) asparagine glycan.

Belongs to the sulfotransferase 3 family. Interacts with wbl/windbeutel; the interaction is direct and does not require pip to be folded. In terms of tissue distribution, ovary-specific. Specifically expressed in the ventral follicle cells of stage 9-10 egg chambers. Expressed in ovaries. Specifically expressed in the ventral follicle cells of stage 9-10 egg chambers.

The protein resides in the golgi apparatus membrane. Its function is as follows. Sulfotransferase involved in dorsoventral axis patterning in early embryos. Required for the ventral activation of ea/easter by the protease snk in the perivitelline space between the embryonic membrane and the eggshell; activation of ea requires both activation of the ndl-gd-snk protease cascade and sulfation of a vitelline membrane component by pip. Probably acts by mediating the sulfation of some glycoprotein or glycosaminoglycan stably deposited in the vitelline membrane, whose ventrally localized modification leads to spatially restricted activation of the protease cascade resulting in localized activation of the spz Toll receptor ligand by ea. In terms of biological role, probably required redundantly with isoform H for dorsoventral axis patterning in embryos. Lacks 2-O-sulfotransferase activity towards completely desulfated N-sulfated (CDSNS) heparin, chondroitin, and chondroitin sulfate A, B (dermatan sulfate), and C. Sulfates several components of the eggshell vitelline membrane, including Vml, Vm26Aa, Vm32E and psd/palisade/Fcp26Aa. Functionally, probably required redundantly with isoform A for dorsoventral axis patterning in embryos. Lacks 2-O-sulfotransferase activity towards CDSNS heparin, chondroitin, and chondroitin sulfate A, B (dermatan sulfate), and C. This Drosophila melanogaster (Fruit fly) protein is Uronyl 2-sulfotransferase homolog pip.